The primary structure comprises 138 residues: Large-conductance mechanosensitive channel (138 aa).

Helical transmembrane passes span valine 15–valine 35, isoleucine 38–glutamine 58, and glycine 80–valine 100.

It belongs to the MscL family. As to quaternary structure, homopentamer.

The protein resides in the cell inner membrane. Its function is as follows. Channel that opens in response to stretch forces in the membrane lipid bilayer. May participate in the regulation of osmotic pressure changes within the cell. This Brucella ovis (strain ATCC 25840 / 63/290 / NCTC 10512) protein is Large-conductance mechanosensitive channel.